Consider the following 292-residue polypeptide: Protease HtpX (292 aa).

The next 2 membrane-spanning stretches (helical) occupy residues 4–24 (IILF…ILAV) and 32–52 (IYGL…LSLI). A Zn(2+)-binding site is contributed by histidine 139. The active site involves glutamate 140. Histidine 143 is a binding site for Zn(2+). Helical transmembrane passes span 150 to 170 (ITMT…SRII) and 193 to 213 (FLFF…ASII). Zn(2+) is bound at residue glutamate 222.

It belongs to the peptidase M48B family. Zn(2+) serves as cofactor.

The protein localises to the cell membrane. The sequence is that of Protease HtpX from Buchnera aphidicola subsp. Schizaphis graminum (strain Sg).